A 369-amino-acid polypeptide reads, in one-letter code: Putative agmatine deiminase (369 aa).

Catalysis depends on cysteine 361, which acts as the Amidino-cysteine intermediate.

This sequence belongs to the agmatine deiminase family.

It catalyses the reaction agmatine + H2O = N-carbamoylputrescine + NH4(+). The protein is Putative agmatine deiminase of Streptococcus mutans serotype c (strain ATCC 700610 / UA159).